The primary structure comprises 411 residues: Gamma-glutamyl phosphate reductase (411 aa).

The protein belongs to the gamma-glutamyl phosphate reductase family.

The protein resides in the cytoplasm. It catalyses the reaction L-glutamate 5-semialdehyde + phosphate + NADP(+) = L-glutamyl 5-phosphate + NADPH + H(+). Its pathway is amino-acid biosynthesis; L-proline biosynthesis; L-glutamate 5-semialdehyde from L-glutamate: step 2/2. Catalyzes the NADPH-dependent reduction of L-glutamate 5-phosphate into L-glutamate 5-semialdehyde and phosphate. The product spontaneously undergoes cyclization to form 1-pyrroline-5-carboxylate. The polypeptide is Gamma-glutamyl phosphate reductase (Nautilia profundicola (strain ATCC BAA-1463 / DSM 18972 / AmH)).